The chain runs to 375 residues: Geranylgeranyl transferase type-1 subunit beta (375 aa).

Residues Met1–Ala33 are disordered. Ser2 carries the post-translational modification N-acetylserine. 4 PFTB repeats span residues Ser157 to Asp199, Lys206 to Gly247, Pro265 to Gly306, and Lys313 to Glu354. Residues His232–Gly234 and Arg285–Lys288 contribute to the geranylgeranyl diphosphate site. Zn(2+) contacts are provided by Asp291 and Cys293. Position 294-297 (Tyr294–Trp297) interacts with geranylgeranyl diphosphate. Position 342 (His342) interacts with Zn(2+).

The protein belongs to the protein prenyltransferase subunit beta family. Heterodimer of an alpha and a beta subunit. Zn(2+) serves as cofactor. Requires Mg(2+) as cofactor. As to expression, expressed in roots, leaves, stems, flowers and siliques.

The catalysed reaction is geranylgeranyl diphosphate + L-cysteinyl-[protein] = S-geranylgeranyl-L-cysteinyl-[protein] + diphosphate. Its function is as follows. Catalyzes the transfer of a geranyl-geranyl moiety from geranyl-geranyl pyrophosphate to a cysteine at the fourth position from the C-terminus of proteins having the C-terminal sequence Cys-aliphatic-aliphatic-X (CaaX). Seems to exclusively prenylate CaaX substrates with leucine in the terminal position. The beta subunit is responsible for peptide-binding. May negatively regulate abscisic acid (ABA) signaling in guard cells and auxin-induced lateral root initiation. In terms of biological role, negatively regulates ABA signaling in guard cells. in negative regulation of auxin-induced lateral root initiation. This chain is Geranylgeranyl transferase type-1 subunit beta (GGB), found in Arabidopsis thaliana (Mouse-ear cress).